The sequence spans 429 residues: 3-phosphoshikimate 1-carboxyvinyltransferase (429 aa).

3-phosphoshikimate-binding residues include K23, S24, and R28. A phosphoenolpyruvate-binding site is contributed by K23. Residues G97 and R125 each contribute to the phosphoenolpyruvate site. 3-phosphoshikimate is bound by residues S170, S171, Q172, S198, D314, N338, and K342. Q172 is a phosphoenolpyruvate binding site. D314 serves as the catalytic Proton acceptor. Phosphoenolpyruvate contacts are provided by R346, R388, and K413.

Belongs to the EPSP synthase family. In terms of assembly, monomer.

The protein resides in the cytoplasm. The catalysed reaction is 3-phosphoshikimate + phosphoenolpyruvate = 5-O-(1-carboxyvinyl)-3-phosphoshikimate + phosphate. The protein operates within metabolic intermediate biosynthesis; chorismate biosynthesis; chorismate from D-erythrose 4-phosphate and phosphoenolpyruvate: step 6/7. Catalyzes the transfer of the enolpyruvyl moiety of phosphoenolpyruvate (PEP) to the 5-hydroxyl of shikimate-3-phosphate (S3P) to produce enolpyruvyl shikimate-3-phosphate and inorganic phosphate. The chain is 3-phosphoshikimate 1-carboxyvinyltransferase from Pectobacterium atrosepticum (strain SCRI 1043 / ATCC BAA-672) (Erwinia carotovora subsp. atroseptica).